We begin with the raw amino-acid sequence, 160 residues long: 2-C-methyl-D-erythritol 2,4-cyclodiphosphate synthase (160 aa).

Asp12 and His14 together coordinate a divalent metal cation. 4-CDP-2-C-methyl-D-erythritol 2-phosphate contacts are provided by residues 12-14 and 38-39; these read DVH and HS. His46 serves as a coordination point for a divalent metal cation. Residues 60–62, 65–69, 136–139, Phe143, and Arg146 contribute to the 4-CDP-2-C-methyl-D-erythritol 2-phosphate site; these read DIG, FPDTD, and TTTE.

The protein belongs to the IspF family. Homotrimer. A divalent metal cation serves as cofactor.

It catalyses the reaction 4-CDP-2-C-methyl-D-erythritol 2-phosphate = 2-C-methyl-D-erythritol 2,4-cyclic diphosphate + CMP. Its pathway is isoprenoid biosynthesis; isopentenyl diphosphate biosynthesis via DXP pathway; isopentenyl diphosphate from 1-deoxy-D-xylulose 5-phosphate: step 4/6. Its function is as follows. Involved in the biosynthesis of isopentenyl diphosphate (IPP) and dimethylallyl diphosphate (DMAPP), two major building blocks of isoprenoid compounds. Catalyzes the conversion of 4-diphosphocytidyl-2-C-methyl-D-erythritol 2-phosphate (CDP-ME2P) to 2-C-methyl-D-erythritol 2,4-cyclodiphosphate (ME-CPP) with a corresponding release of cytidine 5-monophosphate (CMP). In Acinetobacter baumannii (strain AB307-0294), this protein is 2-C-methyl-D-erythritol 2,4-cyclodiphosphate synthase.